The chain runs to 360 residues: Lactosylceramide 4-alpha-galactosyltransferase (360 aa).

Topologically, residues 1 to 30 are cytoplasmic; it reads MGISRSDLEETMSKPPDCLPRMLRGTPRQR. Residues 31-51 form a helical; Signal-anchor for type II membrane protein membrane-spanning segment; sequence VFTLFIISFKFTFLVSILIYW. The Lumenal portion of the chain corresponds to 52–360; the sequence is HTVGAPKDQR…TTHRAMTMYL (309 aa). The short motif at 199-201 is the DXD motif element; the sequence is DTD. 2 N-linked (GlcNAc...) asparagine glycosylation sites follow: N210 and N316.

It belongs to the glycosyltransferase 32 family. In terms of tissue distribution, ubiquitous. Highly expressed in kidney, mesenteric lymph node, spleen and brain.

The protein resides in the golgi apparatus membrane. It catalyses the reaction a beta-D-Gal-(1-&gt;4)-beta-D-Glc-(1&lt;-&gt;1)-Cer(d18:1(4E)) + UDP-alpha-D-galactose = a globoside Gb3Cer (d18:1(4E)) + UDP + H(+). It carries out the reaction a beta-D-Gal-(1&lt;-&gt;1')-ceramide + UDP-alpha-D-galactose = alpha-D-Gal-(1-&gt;4)-beta-D-Gal-(1&lt;-&gt;1')-Cer + UDP + H(+). It participates in glycolipid biosynthesis. Its function is as follows. Catalyzes the transfer of galactose from UDP-alpha-D-galactose to lactosylceramide/beta-D-galactosyl-(1-&gt;4)-beta-D-glucosyl-(1&lt;-&gt;1)-ceramide(d18:1(4E)) to produce globotriaosylceramide/globoside Gb3Cer (d18:1(4E)). Also able to transfer galactose to galactosylceramide/beta-D-Gal-(1&lt;-&gt;1')-Cer. Globoside Gb3Cer is a glycosphingolipid of the globo serie, one of the major types of neutral root structures of glycosphingolipids, that constitute a significant portion of mammalian cell membranes. This is Lactosylceramide 4-alpha-galactosyltransferase from Rattus norvegicus (Rat).